The following is a 337-amino-acid chain: Transaldolase (337 aa).

The short motif at 1–10 (MSGSPVKRQR) is the Nuclear localization signal element. The Schiff-base intermediate with substrate role is filled by Lys-142. The residue at position 219 (Lys-219) is an N6-acetyllysine. Ser-237 and Ser-256 each carry phosphoserine. An N6-acetyllysine mark is found at Lys-269, Lys-286, and Lys-321.

The protein belongs to the transaldolase family. Type 1 subfamily. As to quaternary structure, homodimer. Interacts with KPNA1 and KPNA4.

The protein localises to the nucleus. Its subcellular location is the cytoplasm. It catalyses the reaction D-sedoheptulose 7-phosphate + D-glyceraldehyde 3-phosphate = D-erythrose 4-phosphate + beta-D-fructose 6-phosphate. It participates in carbohydrate degradation; pentose phosphate pathway; D-glyceraldehyde 3-phosphate and beta-D-fructose 6-phosphate from D-ribose 5-phosphate and D-xylulose 5-phosphate (non-oxidative stage): step 2/3. Catalyzes the rate-limiting step of the non-oxidative phase in the pentose phosphate pathway. Catalyzes the reversible conversion of sedheptulose-7-phosphate and D-glyceraldehyde 3-phosphate into erythrose-4-phosphate and beta-D-fructose 6-phosphate. The protein is Transaldolase (TALDO1) of Sus scrofa (Pig).